The chain runs to 355 residues: 3-dehydroquinate synthase (355 aa).

Residues 69-74, 103-107, 127-128, lysine 140, lysine 149, and 167-170 each bind NAD(+); these read DGEQHK, GVIGD, TT, and TLQT. Glutamate 182, histidine 245, and histidine 262 together coordinate Zn(2+).

It belongs to the sugar phosphate cyclases superfamily. Dehydroquinate synthase family. It depends on Co(2+) as a cofactor. Requires Zn(2+) as cofactor. NAD(+) serves as cofactor.

The protein localises to the cytoplasm. It carries out the reaction 7-phospho-2-dehydro-3-deoxy-D-arabino-heptonate = 3-dehydroquinate + phosphate. The protein operates within metabolic intermediate biosynthesis; chorismate biosynthesis; chorismate from D-erythrose 4-phosphate and phosphoenolpyruvate: step 2/7. In terms of biological role, catalyzes the conversion of 3-deoxy-D-arabino-heptulosonate 7-phosphate (DAHP) to dehydroquinate (DHQ). In Pseudoalteromonas atlantica (strain T6c / ATCC BAA-1087), this protein is 3-dehydroquinate synthase.